Consider the following 204-residue polypeptide: N-(5'-phosphoribosyl)anthranilate isomerase (204 aa).

It belongs to the TrpF family.

It carries out the reaction N-(5-phospho-beta-D-ribosyl)anthranilate = 1-(2-carboxyphenylamino)-1-deoxy-D-ribulose 5-phosphate. Its pathway is amino-acid biosynthesis; L-tryptophan biosynthesis; L-tryptophan from chorismate: step 3/5. The polypeptide is N-(5'-phosphoribosyl)anthranilate isomerase (Bacillus anthracis (strain A0248)).